Here is a 520-residue protein sequence, read N- to C-terminus: Zinc finger and BTB domain-containing protein 45 (520 aa).

Positions 33-96 (CDVTVRIREA…LYSGSLVVAQ (64 aa)) constitute a BTB domain. 2 disordered regions span residues 182–272 (PAPP…GGAG) and 337–372 (FHLGAPGPPAPTPPTPSGPAPAPPPTFYPTLQPDAA). Positions 206–225 (RGEEDDDEETDEETDAEEGE) are enriched in acidic residues. Residues 342–363 (PGPPAPTPPTPSGPAPAPPPTF) are compositionally biased toward pro residues. 4 consecutive C2H2-type zinc fingers follow at residues 412–434 (YECSHCRKTFSSRKNYTKHMFIH), 440–462 (HQCAVCWRSFSLRDYLLKHMVTH), 468–490 (FQCAVCAKRFTQKSSLNVHMRTH), and 495–517 (APCPACGKVFSHRALLERHLAAH).

The protein belongs to the krueppel C2H2-type zinc-finger protein family.

The protein resides in the nucleus. Its function is as follows. May be involved in transcriptional regulation. In the central nervous system, may play a role in glial cell differentiation. The polypeptide is Zinc finger and BTB domain-containing protein 45 (Mus musculus (Mouse)).